A 461-amino-acid polypeptide reads, in one-letter code: Demethyllactenocin mycarosyltransferase (461 aa).

The tract at residues 1–21 (MAGLRPGAGVPPGTPWPISPG) is disordered.

The protein belongs to the UDP-glycosyltransferase family.

It catalyses the reaction dTDP-beta-L-mycarose + demethyllactenocin = demethylmacrocin + dTDP + H(+). Its function is as follows. Involved in the biosynthesis of mycarose which is a 6-deoxyhexose sugar required during production of the macrolide antibiotic tylosin. Catalyzes the transfer of L-mycarosyl from dTDP-beta-L-mycarose to demethyllactenocin to yield demethylmacrocin. This chain is Demethyllactenocin mycarosyltransferase (tylCV), found in Streptomyces fradiae (Streptomyces roseoflavus).